Here is an 87-residue protein sequence, read N- to C-terminus: Serine rich endogenous peptide 17 (87 aa).

An N-terminal signal peptide occupies residues 1 to 28; it reads MTGKAPFFVILIAALLLLSSFFFGEVKA. A disordered region spans residues 32 to 87; the sequence is KQPKHRKLGNREGDENRSNEIVVQMKARVKRSKSKRGPQKKEPYKKPPCSPPTHPA. Residues 40-49 are compositionally biased toward basic and acidic residues; the sequence is GNREGDENRS. The short motif at 51 to 71 is the SCOOP motif element; it reads EIVVQMKARVKRSKSKRGPQK. Positions 58–69 are enriched in basic residues; the sequence is ARVKRSKSKRGP. The SxS motif essential for MIK2 binding motif lies at 63 to 65; that stretch reads SKS. The segment covering 77 to 87 has biased composition (pro residues); that stretch reads KPPCSPPTHPA.

Belongs to the serine rich endogenous peptide (SCOOP) phytocytokine family. As to quaternary structure, interacts with MIK2 (via extracellular leucine-rich repeat domain); this interaction triggers the formation of complex between MIK2 and the BAK1/SERK3 and SERK4 coreceptors, and subsequent BAK1 activation by phosphorylation.

It localises to the cell membrane. The protein localises to the secreted. Its subcellular location is the extracellular space. It is found in the apoplast. Its function is as follows. Brassicaceae-specific phytocytokine (plant endogenous peptide released into the apoplast) perceived by MIK2 in a BAK1/SERK3 and SERK4 coreceptors-dependent manner, that modulates various physiological and antimicrobial processes including growth prevention and reactive oxygen species (ROS) response regulation. This Arabidopsis thaliana (Mouse-ear cress) protein is Serine rich endogenous peptide 17.